Consider the following 53-residue polypeptide: Small polypeptide DEVIL 16 (53 aa).

N-linked (GlcNAc...) asparagine glycosylation is present at N6. A required for DVL/RTFL small polypeptide activity region spans residues 14-45 (TFGQKCSHVVKKQRAKFYILRRCIAMLVCWHD). The chain crosses the membrane as a helical span at residues 30-46 (FYILRRCIAMLVCWHDQ).

The protein belongs to the DVL/RTFL small polypeptides family. As to expression, mostly expressed in stems, flower buds, flowers and seedling shoots, to a lesser extent, in roots and young cauline leaves, but not in mature rosette leaves. Barely observed in cotyledons and leaf primordia.

The protein localises to the cell membrane. Functionally, small polypeptide acting as a regulatory molecule which coordinates cellular responses required for differentiation, growth and development, probably by restricting polar cell proliferation in lateral organs (e.g. leaves) and coordinating socket cell recruitment and differentiation at trichome sites. Regulates the positional cue and cell proliferation along the body axis. In Arabidopsis thaliana (Mouse-ear cress), this protein is Small polypeptide DEVIL 16.